We begin with the raw amino-acid sequence, 354 residues long: Uroporphyrinogen decarboxylase (354 aa).

Substrate contacts are provided by residues 27 to 31 (RQAGR), Asp77, Tyr153, Thr208, and His326.

This sequence belongs to the uroporphyrinogen decarboxylase family. Homodimer.

The protein resides in the cytoplasm. It carries out the reaction uroporphyrinogen III + 4 H(+) = coproporphyrinogen III + 4 CO2. It functions in the pathway porphyrin-containing compound metabolism; protoporphyrin-IX biosynthesis; coproporphyrinogen-III from 5-aminolevulinate: step 4/4. Catalyzes the decarboxylation of four acetate groups of uroporphyrinogen-III to yield coproporphyrinogen-III. This Neisseria gonorrhoeae (strain ATCC 700825 / FA 1090) protein is Uroporphyrinogen decarboxylase.